A 493-amino-acid polypeptide reads, in one-letter code: Glutamyl-tRNA(Gln) amidotransferase subunit A (493 aa).

Residues K79 and S159 each act as charge relay system in the active site. The active-site Acyl-ester intermediate is the S183.

This sequence belongs to the amidase family. GatA subfamily. Heterotrimer of A, B and C subunits.

The catalysed reaction is L-glutamyl-tRNA(Gln) + L-glutamine + ATP + H2O = L-glutaminyl-tRNA(Gln) + L-glutamate + ADP + phosphate + H(+). Its function is as follows. Allows the formation of correctly charged Gln-tRNA(Gln) through the transamidation of misacylated Glu-tRNA(Gln) in organisms which lack glutaminyl-tRNA synthetase. The reaction takes place in the presence of glutamine and ATP through an activated gamma-phospho-Glu-tRNA(Gln). The sequence is that of Glutamyl-tRNA(Gln) amidotransferase subunit A from Brucella abortus (strain S19).